The primary structure comprises 102 residues: Phosphoribosyl-ATP pyrophosphatase (102 aa).

The protein belongs to the PRA-PH family.

The protein resides in the cytoplasm. The catalysed reaction is 1-(5-phospho-beta-D-ribosyl)-ATP + H2O = 1-(5-phospho-beta-D-ribosyl)-5'-AMP + diphosphate + H(+). It functions in the pathway amino-acid biosynthesis; L-histidine biosynthesis; L-histidine from 5-phospho-alpha-D-ribose 1-diphosphate: step 2/9. The protein is Phosphoribosyl-ATP pyrophosphatase of Dinoroseobacter shibae (strain DSM 16493 / NCIMB 14021 / DFL 12).